The sequence spans 3332 residues: Nonribosomal peptide synthetase imqB (3332 aa).

The adenylation 1 stretch occupies residues 230-622 (FSEQVKAHPG…IGRKDTQVKV (393 aa)). Residues 764-846 (GRITPQEKLL…DMARCITRVD (83 aa)) enclose the Carrier 1 domain. S801 bears the O-(pantetheine 4'-phosphoryl)serine mark. Positions 886–1314 (DIYPCTPLQE…NCLTRKELHQ (429 aa)) are condensation 1. The segment at 1336-1740 (EVSNTRPTAP…GRKDRQLKVR (405 aa)) is adenylation 2. The 75-residue stretch at 1880–1954 (AIATPKEEKL…EMAEKAAETG (75 aa)) folds into the Carrier 2 domain. S1915 bears the O-(pantetheine 4'-phosphoryl)serine mark. The interval 1992 to 2402 (EDIYPCTPLQ…CLSEIDTQQI (411 aa)) is condensation 2. Residues 2422-2819 (AQQAREHPAT…GRKDTQVKIR (398 aa)) form an adenylation 3 region. Residues 2963–3039 (EVATNDEAAV…DLASRIGRVE (77 aa)) form the Carrier 3 domain. An O-(pantetheine 4'-phosphoryl)serine modification is found at S3000. Residues 3058–3323 (SSNPTLIQGQ…ETTRHIRDFC (266 aa)) form a thioesterase (TE) domain region.

The protein belongs to the NRP synthetase family.

It functions in the pathway secondary metabolite biosynthesis. Its function is as follows. Nonribosomal peptide synthetase; part of the gene cluster that mediates the biosynthesis of imizoquins A to D, tripeptide-derived alkaloids that serve a protective role against oxidative stress that are essential for normal germination. ImqB is a canonical three-module NRPS that assembles the tripeptide backbone of the imizoquins via condensation of Trp, Tyr, and Leu-derived precursors. N-methylation by imqF and phenol oxidation by imqC, followed by cyclization via the FAD-dependent oxidase imqH carry out the three-step transformation of L-tyrosine into tetrahydroisoquinoline. Importantly, this sequence requires the presence of a free amine in the tyrosine moiety, indicating that isoquinoline formation occurs prior to peptide bond formation. The imidazolidin-4-one ring of imizoquins could form following additional oxidation of the methyl-derived bridgehead carbon by imqH. Lastly, O-methylation by imqG and leucine hydroxylation by imqE complete biosynthesis of the imizoquins. This is Nonribosomal peptide synthetase imqB from Aspergillus flavus (strain ATCC 200026 / FGSC A1120 / IAM 13836 / NRRL 3357 / JCM 12722 / SRRC 167).